A 594-amino-acid polypeptide reads, in one-letter code: Developmental and secondary metabolism regulator veA (594 aa).

Residues 24–220 (GRRLFYRIDV…AEQGTRVRIR (197 aa)) form the Velvet domain. Positions 38 to 43 (EKCRAC) match the Nuclear localization signal motif. 2 disordered regions span residues 40-59 (CRAC…VDPP) and 210-558 (MAEQ…DVEE). The segment covering 217–229 (VRIRRDVRMRRRD) has biased composition (basic residues). A compositionally biased stretch (pro residues) spans 296-307 (APPPPNPPPPGF). Residues 327-351 (SHSQYQQPTSSSSSSEQVSSVPQSP) are compositionally biased toward low complexity. The span at 352–362 (AYSSHAAQQHY) shows a compositional bias: polar residues. The span at 374 to 383 (PERRLSDHRS) shows a compositional bias: basic and acidic residues. The span at 384–403 (SQPNNHPQQSPHQHSYSHRS) shows a compositional bias: low complexity. Basic and acidic residues predominate over residues 405–416 (PQRERFMPDSRR). The tract at residues 457-506 (VADTQATPHLPPIRWPRPNMNLPSPPSEHQEALQPLQPAPLHYESQTHQQ) is PEST. The segment covering 523 to 538 (YSYGYSYSHNHSHGYG) has biased composition (low complexity).

It belongs to the velvet family. VeA subfamily. As to quaternary structure, component of the heterotrimeric velvet complex composed of LAEA, VEA and VELB; VEA acting as a bridging protein between LAEA and VELB.

Its subcellular location is the nucleus. It is found in the cytoplasm. Its function is as follows. Component of the velvet transcription factor complex that controls sexual/asexual developmental ratio in response to light, promoting sexual development in the darkness while stimulating asexual sporulation under illumination. The velvet complex acts as a global regulator for secondary metabolite gene expression. Regulates of the response to reactive oxygen species (ROS) stress. The protein is Developmental and secondary metabolism regulator veA of Pyricularia oryzae (strain 70-15 / ATCC MYA-4617 / FGSC 8958) (Rice blast fungus).